The following is a 61-amino-acid chain: Small ribosomal subunit protein uS14 (61 aa).

Zn(2+)-binding residues include Cys24, Cys27, Cys40, and Cys43.

It belongs to the universal ribosomal protein uS14 family. Zinc-binding uS14 subfamily. In terms of assembly, part of the 30S ribosomal subunit. Contacts proteins S3 and S10. Requires Zn(2+) as cofactor.

Its function is as follows. Binds 16S rRNA, required for the assembly of 30S particles and may also be responsible for determining the conformation of the 16S rRNA at the A site. The sequence is that of Small ribosomal subunit protein uS14 from Deinococcus deserti (strain DSM 17065 / CIP 109153 / LMG 22923 / VCD115).